The following is a 771-amino-acid chain: U-box domain-containing protein 6 (771 aa).

Residues 274-348 (IPPEELRCPI…ASWCEQNGIT (75 aa)) enclose the U-box domain. Residues 394–415 (EESSTIESERQQKEKNNAPDEV) form a disordered region. Over residues 400 to 411 (ESERQQKEKNNA) the composition is skewed to basic and acidic residues. 5 ARM repeats span residues 456 to 499 (EEAR…NLAV), 502 to 542 (NRNK…CLEK), 544 to 581 (KPVI…NLST), 583 to 622 (SPNI…NLAS), and 625 to 664 (EGKE…ILCT). Residues 706-722 (EQRHRDQPSPNKEEAPR) show a composition bias toward basic and acidic residues. Positions 706 to 751 (EQRHRDQPSPNKEEAPRKTVSAPMAIPAPVSAPESEVKPLTKSISR) are disordered.

It catalyses the reaction S-ubiquitinyl-[E2 ubiquitin-conjugating enzyme]-L-cysteine + [acceptor protein]-L-lysine = [E2 ubiquitin-conjugating enzyme]-L-cysteine + N(6)-ubiquitinyl-[acceptor protein]-L-lysine.. It participates in protein modification; protein ubiquitination. In terms of biological role, functions as an E3 ubiquitin ligase. In Arabidopsis thaliana (Mouse-ear cress), this protein is U-box domain-containing protein 6 (PUB6).